The sequence spans 343 residues: Photosystem II protein D1 (343 aa).

The next 3 membrane-spanning stretches (helical) occupy residues 28–45 (YIGW…VSTV), 117–132 (HFLA…EYEY), and 141–155 (WIYL…AASA). Chlorophyll a is bound at residue histidine 117. Position 125 (tryptophan 125) interacts with pheophytin a. [CaMn4O5] cluster contacts are provided by aspartate 169 and glutamate 188. Residues 196–217 (FHILGVSAVFGGSLFSAMHGSL) traverse the membrane as a helical segment. Histidine 197 provides a ligand contact to chlorophyll a. Residues histidine 214 and 263 to 264 (SF) each bind a quinone. Fe cation is bound at residue histidine 214. A Fe cation-binding site is contributed by histidine 271. A helical transmembrane segment spans residues 273–287 (FLAAWPVIGIWCTAI). The [CaMn4O5] cluster site is built by histidine 331, glutamate 332, aspartate 341, and alanine 343.

The protein belongs to the reaction center PufL/M/PsbA/D family. PSII is composed of 1 copy each of membrane proteins PsbA, PsbB, PsbC, PsbD, PsbE, PsbF, PsbH, PsbI, PsbJ, PsbK, PsbL, PsbM, PsbT, PsbX, PsbY, PsbZ, Psb30/Ycf12, at least 3 peripheral proteins of the oxygen-evolving complex and a large number of cofactors. It forms dimeric complexes. Requires The D1/D2 heterodimer binds P680, chlorophylls that are the primary electron donor of PSII, and subsequent electron acceptors. It shares a non-heme iron and each subunit binds pheophytin, quinone, additional chlorophylls, carotenoids and lipids. D1 provides most of the ligands for the Mn4-Ca-O5 cluster of the oxygen-evolving complex (OEC). There is also a Cl(-1) ion associated with D1 and D2, which is required for oxygen evolution. The PSII complex binds additional chlorophylls, carotenoids and specific lipids. as cofactor. Post-translationally, tyr-160 forms a radical intermediate that is referred to as redox-active TyrZ, YZ or Y-Z.

It localises to the plastid. Its subcellular location is the chloroplast thylakoid membrane. It catalyses the reaction 2 a plastoquinone + 4 hnu + 2 H2O = 2 a plastoquinol + O2. Functionally, photosystem II (PSII) is a light-driven water:plastoquinone oxidoreductase that uses light energy to abstract electrons from H(2)O, generating O(2) and a proton gradient subsequently used for ATP formation. It consists of a core antenna complex that captures photons, and an electron transfer chain that converts photonic excitation into a charge separation. The D1/D2 (PsbA/PsbD) reaction center heterodimer binds P680, the primary electron donor of PSII as well as several subsequent electron acceptors. This Prorocentrum micans (Red tide dinoflagellate) protein is Photosystem II protein D1.